Reading from the N-terminus, the 780-residue chain is Zinc finger and SCAN domain-containing protein 10 (780 aa).

The tract at residues 1–38 is disordered; it reads MLGESVPAAVEQEQLGEVKLEEEEAVSPEDPRRPESRL. A compositionally biased stretch (basic and acidic residues) spans 29–38; it reads EDPRRPESRL. Residues 56–126 form the SCAN box domain; sequence MGPRASLSRL…LLLEGIHREP (71 aa). Disordered stretches follow at residues 153-237 and 255-324; these read GCAS…SRDQ and KAWP…GSLL. A phosphoserine mark is found at S162 and S208. Residues 202–224 are compositionally biased toward polar residues; sequence SSKQPLSPGPQKTFQALQESSPQ. T268 carries the post-translational modification Phosphothreonine. The span at 268-280 shows a compositional bias: basic and acidic residues; the sequence is TPDKEEFKQEEPK. 14 C2H2-type zinc fingers span residues 347–370, 376–398, 404–426, 432–454, 476–498, 522–544, 550–572, 578–600, 606–628, 634–656, 662–684, 690–712, 724–746, and 752–774; these read FICA…LRSH, FLCL…MRTH, HACH…LLTH, FLCA…LLAH, VLCS…LRIH, FVCS…RRVH, FSCQ…QRVH, YACP…LLTH, HHCT…QRSH, CRCS…QRIH, HACD…RRSH, YSCQ…LATH, QECV…LLVH, and YSCT…LRTH. Q483 carries the N5-methylglutamine modification. Positions 492–520 are disordered; the sequence is KRHLRIHARDKDRRSSEGSGSRRRDSDRR. Residues 498-520 are compositionally biased toward basic and acidic residues; sequence HARDKDRRSSEGSGSRRRDSDRR.

In terms of assembly, interacts with POU5F1/OCT4 and SOX2. Post-translationally, methylated at Gln-483 by N6AMT1.

The protein localises to the nucleus. In terms of biological role, embryonic stem (ES) cell-specific transcription factor required to maintain ES cell pluripotency. Can both activate and /or repress expression of target genes, depending on the context. Specifically binds the 5'-[GA]CGCNNGCG[CT]-3' DNA consensus sequence. Regulates expression of POU5F1/OCT4, ZSCAN4 and ALYREF/THOC4. This chain is Zinc finger and SCAN domain-containing protein 10 (ZSCAN10), found in Homo sapiens (Human).